Consider the following 105-residue polypeptide: Large ribosomal subunit protein uL24 (105 aa).

This sequence belongs to the universal ribosomal protein uL24 family. In terms of assembly, part of the 50S ribosomal subunit.

Its function is as follows. One of two assembly initiator proteins, it binds directly to the 5'-end of the 23S rRNA, where it nucleates assembly of the 50S subunit. One of the proteins that surrounds the polypeptide exit tunnel on the outside of the subunit. The protein is Large ribosomal subunit protein uL24 of Xylella fastidiosa (strain M12).